Reading from the N-terminus, the 504-residue chain is L-carnitine/gamma-butyrobetaine antiporter (504 aa).

Helical transmembrane passes span 10 to 30, 51 to 71, 92 to 112, 143 to 163, 195 to 215, 231 to 251, 263 to 283, 316 to 336, 347 to 367, 398 to 418, 446 to 466, and 475 to 495; these read IEPK…WLTV, WGWA…WLVF, IFMM…SIEI, GPLP…FFFV, FYLV…TPLV, LDAI…ACGL, SYLS…SFIM, WTVF…IFLA, LCFG…TVLG, WAAL…CFIA, LLVR…LLAL, and AIIA…LSFI.

Belongs to the BCCT transporter (TC 2.A.15) family. CaiT subfamily. As to quaternary structure, homotrimer.

The protein localises to the cell inner membrane. It carries out the reaction 4-(trimethylamino)butanoate(in) + (R)-carnitine(out) = 4-(trimethylamino)butanoate(out) + (R)-carnitine(in). It functions in the pathway amine and polyamine metabolism; carnitine metabolism. Functionally, catalyzes the exchange of L-carnitine for gamma-butyrobetaine. This is L-carnitine/gamma-butyrobetaine antiporter from Shigella flexneri serotype 5b (strain 8401).